The sequence spans 121 residues: MARIAGVDIPNDKRVVISLTYVYGIGLATSKKILAAAGVSEDIRVKDLTNDQEDAIRREVDAIKVEGDLRREVNLNIKRLMEIGSYRGIRHRRGLPVRGQNTKNNARTRKGKAVAIAGKKK.

The segment at leucine 95–lysine 121 is disordered. Residues alanine 106–lysine 121 show a composition bias toward basic residues.

The protein belongs to the universal ribosomal protein uS13 family. Part of the 30S ribosomal subunit. Forms a loose heterodimer with protein S19. Forms two bridges to the 50S subunit in the 70S ribosome.

Functionally, located at the top of the head of the 30S subunit, it contacts several helices of the 16S rRNA. In the 70S ribosome it contacts the 23S rRNA (bridge B1a) and protein L5 of the 50S subunit (bridge B1b), connecting the 2 subunits; these bridges are implicated in subunit movement. Contacts the tRNAs in the A and P-sites. In Streptococcus thermophilus (strain CNRZ 1066), this protein is Small ribosomal subunit protein uS13.